The chain runs to 542 residues: MGPGARLALLALLALGGDPAAATGREDTFSALTSVARALAPERRLLGTLRRYLRGEEARLRDLTRFYDKVLSLHEDLKIPVVNPLLAFTVIKRLQSDWRNVVHSLEATENIRALKDGYEKVEQDLPAFEDLEGAARALMRLQDVYMLNVKGLARGVFQRVTGSSITDLYSPRQLFSLTADDCFQVGKVAYDTGDYYHAIPWLEEAVSLFRRAHGEWKTEDEASLEDALDYLAFACFQVGNVSCALSLSREFLVYSPDNKRMARNVLKYERLLAENGHQMAAETAIQRPNVPHLQTRDTYEGLCQTLGSQPTHYQIPSLYCSYETNSSPYLLLQPARKEVVHLRPLIALYHDFVSDEEAQKIRELAEPWLQRSVVASGEKQLQVEYRISKSAWLKDTVDPMLVTLDHRIAALTGLDIQPPYAEYLQVVNYGIGGHYEPHFDHATSPSSPLYRMKSGNRVATFMIYLSSVEAGGATAFIYGNFSVPVVKNAALFWWNLHRSGEGDGDTLHAGCPVLVGDKWVANKWIHEYGQEFRRPCSTNPED.

An N-terminal signal peptide occupies residues 1-24 (MGPGARLALLALLALGGDPAAATG). Residues 105 to 129 (LEATENIRALKDGYEKVEQDLPAFE) adopt a coiled-coil conformation. The stretch at 225–258 (EDALDYLAFACFQVGNVSCALSLSREFLVYSPDN) is one TPR repeat. The N-linked (GlcNAc...) asparagine glycan is linked to Asn240. Positions 420 to 527 (YAEYLQVVNY…KWVANKWIHE (108 aa)) constitute a Fe2OG dioxygenase domain. His438 and Asp440 together coordinate Fe cation. Residue Asn480 is glycosylated (N-linked (GlcNAc...) asparagine). His508 contributes to the Fe cation binding site. Position 518 (Lys518) interacts with 2-oxoglutarate.

Belongs to the P4HA family. In terms of assembly, heterotetramer of two alpha-3 chains and two beta chains (the beta chain is the multi-functional PDI). It depends on Fe(2+) as a cofactor. L-ascorbate is required as a cofactor. In terms of processing, N-glycosylation plays no role in the catalytic activity.

It localises to the endoplasmic reticulum lumen. It catalyses the reaction L-prolyl-[collagen] + 2-oxoglutarate + O2 = trans-4-hydroxy-L-prolyl-[collagen] + succinate + CO2. Catalyzes the post-translational formation of 4-hydroxyproline in -Xaa-Pro-Gly- sequences in collagens and other proteins. The chain is Prolyl 4-hydroxylase subunit alpha-3 (P4ha3) from Mus musculus (Mouse).